The chain runs to 77 residues: UPF0401 protein ECP_3010 (77 aa).

Belongs to the UPF0401 family.

The protein is UPF0401 protein ECP_3010 of Escherichia coli O6:K15:H31 (strain 536 / UPEC).